A 421-amino-acid polypeptide reads, in one-letter code: Peptide chain release factor subunit 1 (421 aa).

It belongs to the eukaryotic release factor 1 family. In terms of assembly, heterodimer of two subunits, one of which binds GTP.

Its subcellular location is the cytoplasm. Functionally, directs the termination of nascent peptide synthesis (translation) in response to the termination codons UAA, UAG and UGA. In Methanocaldococcus jannaschii (strain ATCC 43067 / DSM 2661 / JAL-1 / JCM 10045 / NBRC 100440) (Methanococcus jannaschii), this protein is Peptide chain release factor subunit 1 (prf1).